Here is an 811-residue protein sequence, read N- to C-terminus: MLMTTPGSPLPSPDVLLEAANRAARAIPPLWPLASSVAVNPFLGQTGEPLATAASRLRRVAGIPLTMPRSWYADRLRSGEIAEEDLRAAFESAPAALRPKTFASLKRAVQSERPEPHAIPTLADLARDVAGIDWPAIVNDRISHWASSYFDEGQALWAKGQQGAAYSAWRIIATHDLTPEIAGLEGFAQSVADAPANAEDAIIACVARLGLCGPALESYFHRLLTTLGGWSQLARYRLWQAELTGNTDASVTDLLTIRLIWEAALLRKFGPVVEAQWKAAIAAYAEPVSATPEDVVDAILQEAAERAAQWRLGACLTGTSPARVADGRPTLQMAFCIDVRSEVFRRALESLDPGIRTLGFAGFFGLGIGHRRFGSDVVEARLPVLLKPGIFTCSGEATPAVTSSDLAARITARVERAWGRFKLAAISSFAFVEAAGPIYVAKLLRDGLGLKRHAAPNDPAPRPTSALDLDTRLTMAVSILKAMSLTRGFARLVLLAGHGANVVNNPHASALHCGACGGYSGEVNARLLASVLNDREVRADLAERGIIVPEDTLFLAALHDTTTDDVNIYAADHASAAHAEDVDQAERWLKSAGILARGERALRLPRAKQGQDIPHRARDWAELRPEWALAGCQAFIAAPRARTAGHDLAGRAFLHDYDWRRDDGFGVLELILTAPVVVASWISLQYYGSTVAPDVFGAGNKLLHNVTGGIGVVEGNGGLLRAGLPWQSVHDGERLTHEPLRLSVLIEAPREAIARILERHPEVRALFDNLWLHLFALDDKGRMAWRYTGDLQWETCVGDEHADEHSVREVA.

Positions 336, 338, 498, and 513 each coordinate Zn(2+).

It belongs to the inorganic carbon transporter (TC 9.A.2) DabA family. Forms a complex with DabB. It depends on Zn(2+) as a cofactor.

Its subcellular location is the cell inner membrane. Its function is as follows. Part of an energy-coupled inorganic carbon pump. This is Probable inorganic carbon transporter subunit DabA from Azorhizobium caulinodans (strain ATCC 43989 / DSM 5975 / JCM 20966 / LMG 6465 / NBRC 14845 / NCIMB 13405 / ORS 571).